The following is a 175-amino-acid chain: Auxin-responsive protein IAA28 (175 aa).

The interval 1–39 is disordered; sequence MEEEKRLELRLAPPCHQFTSNNNINGSKQKSSTKETSFL. Positions 7-11 match the EAR-like (transcriptional repression) motif; it reads LELRL. The segment covering 17 to 39 has biased composition (polar residues); that stretch reads QFTSNNNINGSKQKSSTKETSFL. The PB1 domain maps to 80–161; sequence ELYVKINMEG…TVKRLHVLKT (82 aa).

This sequence belongs to the Aux/IAA family. In terms of assembly, homodimers and heterodimers. Interacts with TPL. As to expression, in roots and inflorescence stems.

It localises to the nucleus. Its function is as follows. Aux/IAA proteins are short-lived transcriptional factors that function as repressors of early auxin response genes at low auxin concentrations. Repression is thought to result from the interaction with auxin response factors (ARFs), proteins that bind to the auxin-responsive promoter element (AuxRE). Formation of heterodimers with ARF proteins may alter their ability to modulate early auxin response genes expression. The polypeptide is Auxin-responsive protein IAA28 (IAA28) (Arabidopsis thaliana (Mouse-ear cress)).